The primary structure comprises 248 residues: Probable transcriptional regulatory protein RHOS4_22610 (248 aa).

The tract at residues M1 to R21 is disordered.

It belongs to the TACO1 family.

Its subcellular location is the cytoplasm. This is Probable transcriptional regulatory protein RHOS4_22610 from Cereibacter sphaeroides (strain ATCC 17023 / DSM 158 / JCM 6121 / CCUG 31486 / LMG 2827 / NBRC 12203 / NCIMB 8253 / ATH 2.4.1.) (Rhodobacter sphaeroides).